A 232-amino-acid polypeptide reads, in one-letter code: MSNVDRAEIAKFEALAHRWWDRESEFKPLHEINPLRVNWIDERVSLAGKKVLDVGCGGGILSEAMALRGATVTGIDMGEAPLAVAQLHQLESGVQVEYRQITAEALAEEMPEQFDVVTCLEMLEHVPDPSSVIRACYRMVKPGGQVFFSTINRNPKAYLLAIVGAEYILKMLPRGTHDFKKFIRPSELGAWSRDAGLQVKDIIGLTYNPLTKHYKLNSDVDVNYMIQTLREE.

Arg-36, Gly-55, Asp-76, and Leu-120 together coordinate S-adenosyl-L-methionine.

It belongs to the methyltransferase superfamily. UbiG/COQ3 family.

The catalysed reaction is a 3-demethylubiquinol + S-adenosyl-L-methionine = a ubiquinol + S-adenosyl-L-homocysteine + H(+). It catalyses the reaction a 3-(all-trans-polyprenyl)benzene-1,2-diol + S-adenosyl-L-methionine = a 2-methoxy-6-(all-trans-polyprenyl)phenol + S-adenosyl-L-homocysteine + H(+). It participates in cofactor biosynthesis; ubiquinone biosynthesis. Functionally, O-methyltransferase that catalyzes the 2 O-methylation steps in the ubiquinone biosynthetic pathway. The polypeptide is Ubiquinone biosynthesis O-methyltransferase (Pseudomonas putida (strain ATCC 700007 / DSM 6899 / JCM 31910 / BCRC 17059 / LMG 24140 / F1)).